A 730-amino-acid chain; its full sequence is Protein groucho (730 aa).

Positions 144–411 are disordered; sequence QVPGGPPQPM…GKPAYSFHMN (268 aa). Residues 198–233 show a composition bias toward basic and acidic residues; the sequence is AEERLRNSVSPADREKYRTRSPLDIENDSKRRKDEK. Ser205, Ser207, and Ser218 each carry phosphoserine. The CCN domain stretch occupies residues 206-267; the sequence is VSPADREKYR…SPRPNGEHVS (62 aa). The Nuclear localization signal motif lies at 227–230; that stretch reads KRRK. Phosphoserine; by CK2 is present on Ser242. The segment covering 254–283 has biased composition (basic and acidic residues); sequence MESHSPRPNGEHVSMEVRDRESLNGERLEK. A Phosphoserine; by CDC2 modification is found at Ser258. Residues 262 to 425 form a binding to basic helix-loop-helix domain region; it reads NGEHVSMEVR…LQPVPFPPDA (164 aa). Ser267 is modified (phosphoserine). Composition is skewed to low complexity over residues 296 to 308, 322 to 345, and 353 to 362; these read SRSG…STPS, AKAR…QMMP, and YPGAPYQRPA. A phosphothreonine mark is found at Thr326 and Thr328. Over residues 366–382 the composition is skewed to pro residues; that stretch reads QRPPSDPAYGRPPPMPY. WD repeat units lie at residues 442–480, 488–527, 532–571, 574–613, 615–654, 656–695, and 697–730; these read SHGE…NKNP, QRDN…PRIK, SAAP…LVRQ, GHTD…QLQQ, DFSS…KYQL, LHES…SIFQ, and KETS…EVIY.

Belongs to the WD repeat Groucho/TLE family. As to quaternary structure, forms a complex with the hairy/Enhancer of split/deadpan family of basic helix-loop-helix proteins in order to repress transcription. Its activity in regulating transcription depends on other proteins as it lacks a DNA-binding motif. Interacts with hairy/hry (via WRPW motif). Post-translationally, ubiquitinated by XIAP/BIRC4. Ubiquitinated by hyd in response to Wnt signaling, leading to degradation by the proteasome.

It localises to the nucleus. In terms of biological role, transcriptional corepressor that regulates transcription when recruited to specific target DNA by hairy-related bHLH proteins. Maternally required for neurogenesis; in the segregation of the neuroectoderm. Directly or indirectly interacts with Notch and Delta. In Drosophila melanogaster (Fruit fly), this protein is Protein groucho (gro).